The following is a 208-amino-acid chain: Small ribosomal subunit protein uS4 (208 aa).

Residues 98–163 (QRLDNVVYRM…NPQITRAIEL (66 aa)) form the S4 RNA-binding domain.

The protein belongs to the universal ribosomal protein uS4 family. In terms of assembly, part of the 30S ribosomal subunit. Contacts protein S5. The interaction surface between S4 and S5 is involved in control of translational fidelity.

One of the primary rRNA binding proteins, it binds directly to 16S rRNA where it nucleates assembly of the body of the 30S subunit. Functionally, with S5 and S12 plays an important role in translational accuracy. The chain is Small ribosomal subunit protein uS4 from Campylobacter jejuni subsp. jejuni serotype O:6 (strain 81116 / NCTC 11828).